The following is a 122-amino-acid chain: Large ribosomal subunit protein uL14 (122 aa).

Belongs to the universal ribosomal protein uL14 family. In terms of assembly, part of the 50S ribosomal subunit. Forms a cluster with proteins L3 and L19. In the 70S ribosome, L14 and L19 interact and together make contacts with the 16S rRNA in bridges B5 and B8.

Functionally, binds to 23S rRNA. Forms part of two intersubunit bridges in the 70S ribosome. The polypeptide is Large ribosomal subunit protein uL14 (Syntrophomonas wolfei subsp. wolfei (strain DSM 2245B / Goettingen)).